Here is a 230-residue protein sequence, read N- to C-terminus: Thymidylate kinase (230 aa).

20-27 (GGEGSGKS) serves as a coordination point for ATP.

The protein belongs to the thymidylate kinase family.

The enzyme catalyses dTMP + ATP = dTDP + ADP. Functionally, phosphorylation of dTMP to form dTDP in both de novo and salvage pathways of dTTP synthesis. In Nitrobacter winogradskyi (strain ATCC 25391 / DSM 10237 / CIP 104748 / NCIMB 11846 / Nb-255), this protein is Thymidylate kinase.